The primary structure comprises 452 residues: MLEAECDEVELTSRDVGDYLMFKTRITDNFTGDLTLNINTSNLIKFKTCSFFICYGDDKDRYELGWTSTSTSRSIFQHYKDGKYIRDFRIQDPFPILSGSTFPVVISKIIANRVAFRMSRRLNNVIVDKLKNNIIEFLFVVYLDVDTGKIKPNTILKNLDLSSLFIVFSNNGNNKINLPYEIELQTKDRGIVYTKMGNPISYNLFNKFEDLLDIETKGVDKPEDKPKPVFDDKGKQPTDTVPPVDNGKPDISKPGEKQGDIDIASKFNNIVMAKLKAQSSSDPLTKKQCDQLMLSLIKWFEKFGITKDNARLLIFQFGISFSTSKENLNNITNNIVVENDKGGFVKILKIDYLNKLYGSIPESHTHNLERVLLRHYAQEILILLRSKVLEWPRKLARNKGIFEQYAYMACDFFDTAELELTEAETTALTTVKSWTMNHYKKKRQIVNSSQLE.

Composition is skewed to basic and acidic residues over residues 219 to 236 (VDKP…KGKQ) and 247 to 258 (GKPDISKPGEKQ). Residues 219–258 (VDKPEDKPKPVFDDKGKQPTDTVPPVDNGKPDISKPGEKQ) form a disordered region.

Belongs to the closteroviridae minor capsid protein family.

Its subcellular location is the virion. Minor capsid protein that encapsidates the 5'-terminal portion of the viral genome. The polypeptide is Minor capsid protein (Lettuce infectious yellows virus (isolate United States/92) (LIYV)).